Here is a 370-residue protein sequence, read N- to C-terminus: Protein DVU_0535 (370 aa).

At 1 to 258 (MDRRRFLTLL…EELGTKSAPE (258 aa)) the chain is on the cytoplasmic side. 4Fe-4S ferredoxin-type domains follow at residues 40 to 70 (YGVLHDTTRCIGCRKCEQACNEVNKLPAPKA), 101 to 132 (DHPVFRKQQCNHCLEPACASACFVKAFTKNPD), and 133 to 162 (GSVTYDGSLCVGCRYCMVACPFNVPAFQYA). Cys49, Cys52, Cys55, Cys59, Cys110, Cys113, Cys118, Cys122, Cys142, Cys145, Cys148, Cys152, Cys172, Cys175, Cys187, and Cys191 together coordinate [4Fe-4S] cluster. A helical transmembrane segment spans residues 259–284 (YTAGALGAVPMVVGIWPILLTGAYAI). At 285-370 (TKRKEKIAAE…DDAGKPGEDA (86 aa)) the chain is on the periplasmic side. The span at 345–355 (FEEELAAKEQP) shows a compositional bias: basic and acidic residues. The segment at 345-370 (FEEELAAKEQPEAPEGDDAGKPGEDA) is disordered.

The protein localises to the cell membrane. Its function is as follows. HMWC (high-molecular-weight cytochrome c precursor), ORF2, ORF3, ORF4, ORF5, ORF6 in the HMC operon form a transmembrane protein complex that allows electron flow from the periplasmic hydrogenase to the cytoplasmic enzymes that catalyze reduction of sulfates. ORF2 is a transmembrane redox protein. This is Protein DVU_0535 from Nitratidesulfovibrio vulgaris (strain ATCC 29579 / DSM 644 / CCUG 34227 / NCIMB 8303 / VKM B-1760 / Hildenborough) (Desulfovibrio vulgaris).